The chain runs to 119 residues: NAD(P)H-quinone oxidoreductase subunit M (119 aa).

The protein belongs to the complex I NdhM subunit family. In terms of assembly, NDH-1 can be composed of about 15 different subunits; different subcomplexes with different compositions have been identified which probably have different functions.

The protein localises to the cell inner membrane. The catalysed reaction is a plastoquinone + NADH + (n+1) H(+)(in) = a plastoquinol + NAD(+) + n H(+)(out). It carries out the reaction a plastoquinone + NADPH + (n+1) H(+)(in) = a plastoquinol + NADP(+) + n H(+)(out). NDH-1 shuttles electrons from an unknown electron donor, via FMN and iron-sulfur (Fe-S) centers, to quinones in the respiratory and/or the photosynthetic chain. The immediate electron acceptor for the enzyme in this species is believed to be plastoquinone. Couples the redox reaction to proton translocation, and thus conserves the redox energy in a proton gradient. Cyanobacterial NDH-1 also plays a role in inorganic carbon-concentration. The chain is NAD(P)H-quinone oxidoreductase subunit M from Gloeobacter violaceus (strain ATCC 29082 / PCC 7421).